A 329-amino-acid polypeptide reads, in one-letter code: Beta-ketoacyl-[acyl-carrier-protein] synthase III (329 aa).

Residues C123 and H256 contribute to the active site. The tract at residues 257 to 261 (QANIR) is ACP-binding. The active site involves N286.

This sequence belongs to the thiolase-like superfamily. FabH family. As to quaternary structure, homodimer.

Its subcellular location is the cytoplasm. The catalysed reaction is malonyl-[ACP] + acetyl-CoA + H(+) = 3-oxobutanoyl-[ACP] + CO2 + CoA. It participates in lipid metabolism; fatty acid biosynthesis. In terms of biological role, catalyzes the condensation reaction of fatty acid synthesis by the addition to an acyl acceptor of two carbons from malonyl-ACP. Catalyzes the first condensation reaction which initiates fatty acid synthesis and may therefore play a role in governing the total rate of fatty acid production. Possesses both acetoacetyl-ACP synthase and acetyl transacylase activities. Its substrate specificity determines the biosynthesis of branched-chain and/or straight-chain of fatty acids. This Burkholderia cenocepacia (strain HI2424) protein is Beta-ketoacyl-[acyl-carrier-protein] synthase III.